A 510-amino-acid polypeptide reads, in one-letter code: Ninja-family protein mc410 (510 aa).

3 disordered regions span residues Met-1–Leu-179, His-323–Phe-414, and Arg-481–Ser-510. Basic and acidic residues-rich tracts occupy residues Ser-31–Asn-44 and Arg-103–Arg-146. Residues Ser-148–Ala-160 are compositionally biased toward polar residues. Basic and acidic residues-rich tracts occupy residues Arg-363–Val-389 and Arg-397–Arg-406. The segment covering Val-485 to Val-496 has biased composition (polar residues). Low complexity predominate over residues Ser-497 to Ser-510.

Belongs to the Ninja family.

The protein localises to the nucleus. This chain is Ninja-family protein mc410 (MC410), found in Nicotiana tabacum (Common tobacco).